The sequence spans 696 residues: Equisetin cluster transcription factor eqxF (696 aa).

Disordered stretches follow at residues 1-24 (MADQVQDVHPMEWGPGKTPQGRAR) and 73-117 (NQEQ…PADY).

Its subcellular location is the nucleus. Transcription factor that regulates the expression of the gene cluster that mediates the biosynthesis of Equisetin. The polypeptide is Equisetin cluster transcription factor eqxF (Fusarium heterosporum).